A 479-amino-acid polypeptide reads, in one-letter code: Bifunctional AAC/APH (479 aa).

Residues 8-180 enclose the N-acetyltransferase domain; the sequence is ICIRTLIDDD…DCYLMEYRYD (173 aa). Positions 110 to 153 are acetyl-CoA binding site; that stretch reads KGIGTRYIKLIFEFLKKERNANAVILDPHKNNPRAIRAYQKSGF. Aspartate 374 acts as the Proton acceptor; for phosphotransferase activity in catalysis. A gentamycin is bound at residue aspartate 393.

The protein in the C-terminal section; belongs to the aminoglycoside phosphotransferase family.

The protein localises to the cytoplasm. It carries out the reaction a gentamycin + GTP = a gentamycin 2''-phosphate + GDP + H(+). Its function is as follows. Involved in resistance to gentamicin, tobramycin, and kanamycin. Tobramycin and kanamycin resistance is due to the ACC activity, specified by N-terminal region. The C-terminal region is a kinase that phosphorylates several 4,6-disubstituted aminoglycosides. This is Bifunctional AAC/APH (aacA-aphD) from Enterococcus faecalis (strain ATCC 700802 / V583).